Here is a 352-residue protein sequence, read N- to C-terminus: Lipoyl synthase (352 aa).

Positions 1-21 (MTSVDTPTPHGGTPAPAPATA) are disordered. The [4Fe-4S] cluster site is built by Cys-71, Cys-76, Cys-82, Cys-97, Cys-101, Cys-104, and Ser-308. Positions 83–297 (WEDREATFLI…SRVAEEIGFA (215 aa)) constitute a Radical SAM core domain.

It belongs to the radical SAM superfamily. Lipoyl synthase family. [4Fe-4S] cluster is required as a cofactor.

It localises to the cytoplasm. The catalysed reaction is [[Fe-S] cluster scaffold protein carrying a second [4Fe-4S](2+) cluster] + N(6)-octanoyl-L-lysyl-[protein] + 2 oxidized [2Fe-2S]-[ferredoxin] + 2 S-adenosyl-L-methionine + 4 H(+) = [[Fe-S] cluster scaffold protein] + N(6)-[(R)-dihydrolipoyl]-L-lysyl-[protein] + 4 Fe(3+) + 2 hydrogen sulfide + 2 5'-deoxyadenosine + 2 L-methionine + 2 reduced [2Fe-2S]-[ferredoxin]. It functions in the pathway protein modification; protein lipoylation via endogenous pathway; protein N(6)-(lipoyl)lysine from octanoyl-[acyl-carrier-protein]: step 2/2. In terms of biological role, catalyzes the radical-mediated insertion of two sulfur atoms into the C-6 and C-8 positions of the octanoyl moiety bound to the lipoyl domains of lipoate-dependent enzymes, thereby converting the octanoylated domains into lipoylated derivatives. The protein is Lipoyl synthase of Nocardia farcinica (strain IFM 10152).